The following is a 492-amino-acid chain: Glutamyl-tRNA(Gln) amidotransferase subunit A, mitochondrial (492 aa).

Active-site charge relay system residues include Lys-78 and Ser-159. Ser-183 acts as the Acyl-ester intermediate in catalysis.

This sequence belongs to the amidase family. GatA subfamily. In terms of assembly, subunit of the heterotrimeric GatCAB amidotransferase (AdT) complex, composed of A, B and C subunits.

It localises to the mitochondrion. It carries out the reaction L-glutamyl-tRNA(Gln) + L-glutamine + ATP + H2O = L-glutaminyl-tRNA(Gln) + L-glutamate + ADP + phosphate + H(+). In terms of biological role, allows the formation of correctly charged Gln-tRNA(Gln) through the transamidation of misacylated Glu-tRNA(Gln) in the mitochondria. The reaction takes place in the presence of glutamine and ATP through an activated gamma-phospho-Glu-tRNA(Gln). The polypeptide is Glutamyl-tRNA(Gln) amidotransferase subunit A, mitochondrial (Anopheles gambiae (African malaria mosquito)).